A 260-amino-acid chain; its full sequence is Translation initiation factor 2 subunit alpha (260 aa).

The S1 motif domain occupies 12–83 (GDLIVGTVHK…KKGHVDASLK (72 aa)).

Belongs to the eIF-2-alpha family. Heterotrimer composed of an alpha, a beta and a gamma chain.

Functionally, eIF-2 functions in the early steps of protein synthesis by forming a ternary complex with GTP and initiator tRNA. The sequence is that of Translation initiation factor 2 subunit alpha from Methanosphaera stadtmanae (strain ATCC 43021 / DSM 3091 / JCM 11832 / MCB-3).